The following is a 427-amino-acid chain: 3-phosphoshikimate 1-carboxyvinyltransferase (427 aa).

The 3-phosphoshikimate site is built by Lys20, Ser21, and Arg25. Position 20 (Lys20) interacts with phosphoenolpyruvate. Gly92 and Arg120 together coordinate phosphoenolpyruvate. Positions 166, 168, 312, and 339 each coordinate 3-phosphoshikimate. Residue Gln168 participates in phosphoenolpyruvate binding. The active-site Proton acceptor is Asp312. Phosphoenolpyruvate contacts are provided by Arg343 and Arg385.

The protein belongs to the EPSP synthase family. As to quaternary structure, monomer.

It localises to the cytoplasm. It carries out the reaction 3-phosphoshikimate + phosphoenolpyruvate = 5-O-(1-carboxyvinyl)-3-phosphoshikimate + phosphate. Its pathway is metabolic intermediate biosynthesis; chorismate biosynthesis; chorismate from D-erythrose 4-phosphate and phosphoenolpyruvate: step 6/7. In terms of biological role, catalyzes the transfer of the enolpyruvyl moiety of phosphoenolpyruvate (PEP) to the 5-hydroxyl of shikimate-3-phosphate (S3P) to produce enolpyruvyl shikimate-3-phosphate and inorganic phosphate. This is 3-phosphoshikimate 1-carboxyvinyltransferase from Streptococcus equi subsp. equi (strain 4047).